The sequence spans 298 residues: Heat stress transcription factor C-2a (298 aa).

Residues 105 to 128 (SSGGGGAKRKEEAGGCGGGGEAAA) are disordered. The segment at 145–181 (LRREQREIEGRVAAMWRRVQETERRPKQMLAFLVKVV) is hydrophobic repeat HR-A/B. The Nuclear localization signal signature appears at 213 to 216 (KRPR).

This sequence belongs to the HSF family. Class C subfamily. As to quaternary structure, homotrimer. In terms of processing, exhibits temperature-dependent phosphorylation.

The protein resides in the nucleus. Functionally, transcriptional regulator that specifically binds DNA of heat shock promoter elements (HSE). The protein is Heat stress transcription factor C-2a (HSFC2A) of Oryza sativa subsp. japonica (Rice).